Consider the following 264-residue polypeptide: 3-methyl-2-oxobutanoate hydroxymethyltransferase (264 aa).

Residues Asp45 and Asp84 each coordinate Mg(2+). 3-methyl-2-oxobutanoate contacts are provided by residues 45–46, Asp84, and Lys112; that span reads DS. Glu114 contributes to the Mg(2+) binding site. Catalysis depends on Glu181, which acts as the Proton acceptor.

The protein belongs to the PanB family. As to quaternary structure, homodecamer; pentamer of dimers. Requires Mg(2+) as cofactor.

The protein resides in the cytoplasm. The catalysed reaction is 3-methyl-2-oxobutanoate + (6R)-5,10-methylene-5,6,7,8-tetrahydrofolate + H2O = 2-dehydropantoate + (6S)-5,6,7,8-tetrahydrofolate. The protein operates within cofactor biosynthesis; (R)-pantothenate biosynthesis; (R)-pantoate from 3-methyl-2-oxobutanoate: step 1/2. In terms of biological role, catalyzes the reversible reaction in which hydroxymethyl group from 5,10-methylenetetrahydrofolate is transferred onto alpha-ketoisovalerate to form ketopantoate. The protein is 3-methyl-2-oxobutanoate hydroxymethyltransferase of Shewanella frigidimarina (strain NCIMB 400).